A 112-amino-acid chain; its full sequence is Cytochrome c2 (112 aa).

4 residues coordinate heme c: cysteine 14, cysteine 17, histidine 18, and methionine 91.

This sequence belongs to the cytochrome c family. Binds 1 heme c group covalently per subunit.

Cytochrome c2 is found mainly in purple, non-sulfur, photosynthetic bacteria where it functions as the electron donor to the oxidized bacteriochlorophyll in the photophosphorylation pathway. However, it may also have a role in the respiratory chain and is found in some non-photosynthetic bacteria. The protein is Cytochrome c2 (cycA) of Rhodospirillum rubrum.